The sequence spans 1357 residues: Vascular endothelial growth factor receptor 3 (1357 aa).

A signal peptide spans 1–24 (MKRDFTFFCRIWIGIPFFSGLVNG). Ig-like C2-type domains follow at residues 25 to 121 (FSMS…YYRC), 138 to 244 (IFVF…VQVI), 255 to 343 (PEDS…RELT), 352 to 442 (PFIS…LNFT), 453 to 583 (EKEA…TTIP), 583 to 690 (PEGF…HRKY), and 699 to 785 (PRYR…ATVS). At 25 to 796 (FSMSPPTLDN…IGSDDKTNVE (772 aa)) the chain is on the extracellular side. N-linked (GlcNAc...) asparagine glycosylation is found at N44, N48, N114, N216, and N271. 2 disulfide bridges follow: C51/C121 and C173/C225. A disulfide bond links C272 and C331. N360, N400, and N440 each carry an N-linked (GlcNAc...) asparagine glycan. 3 disulfide bridges follow: C473–C562, C493–C514, and C606–C674. N553, N610, N660, N707, N711, and N751 each carry an N-linked (GlcNAc...) asparagine glycan. C720 and C772 form a disulfide bridge. A helical membrane pass occupies residues 797-817 (IVILIGTGVIAIFFWVLLLVI). The Cytoplasmic segment spans residues 818–1357 (FCNVKRVNPA…DYFSSSDQAV (540 aa)). The region spanning 866–1181 (LRLGKVLGHG…ALVEILGDLL (316 aa)) is the Protein kinase domain. ATP is bound by residues 872–880 (LGHGAFGKV) and K900. A disordered region spans residues 978–1007 (QSQVRRMIEAGQASQSEHQPSTSSTNPPRV). The span at 989 to 1005 (QASQSEHQPSTSSTNPP) shows a compositional bias: polar residues. D1045 acts as the Proton acceptor in catalysis. Phosphotyrosine; by autocatalysis occurs at positions 1071 and 1076. A disordered region spans residues 1192 to 1212 (NVSQSSEDDGFSQASSRPPSQ). Residues Y1226, Y1227, Y1334, and Y1338 each carry the phosphotyrosine; by autocatalysis modification.

This sequence belongs to the protein kinase superfamily. Tyr protein kinase family. CSF-1/PDGF receptor subfamily. Interacts with vegfc and vegfd. Monomer in the absence of bound vegfc or vegfd. Homodimer in the presence of bound vegfc or vegfd. Post-translationally, autophosphorylated on tyrosine residues upon ligand binding. Autophosphorylation occurs in trans, i.e. one subunit of the dimeric receptor phosphorylates tyrosine residues on the other subunit.

It localises to the cell membrane. It is found in the cytoplasm. The protein resides in the nucleus. It catalyses the reaction L-tyrosyl-[protein] + ATP = O-phospho-L-tyrosyl-[protein] + ADP + H(+). Its activity is regulated as follows. Present in an inactive conformation in the absence of bound ligand. Binding of vegfc or vegfd leads to dimerization and activation by autophosphorylation on tyrosine residues. Functionally, tyrosine-protein kinase that acts as a cell-surface receptor for vegf or vegfc. Combinations of multiple VEGF receptors are required for development of different blood vessel types in the embryo. Involved in angiogenesis, specifically in VEGF-induced sprouting of new blood vessels, but not required for proper vasculogenesis or hematopoiesis. This Danio rerio (Zebrafish) protein is Vascular endothelial growth factor receptor 3 (flt4).